The chain runs to 1183 residues: Chromosome partition protein Smc (1183 aa).

32–39 lines the ATP pocket; it reads PNGSGKSN. Residues 162-483 adopt a coiled-coil conformation; sequence EEAAGIKKLQ…KLSQDIREFE (322 aa). The region spanning 519–632 is the SMC hinge domain; sequence SGIDGVLISL…VENIDIATDI (114 aa). Positions 666–1019 form a coiled coil; the sequence is INQIFERKKE…VMDLIQEIDE (354 aa).

The protein belongs to the SMC family. In terms of assembly, homodimer.

It localises to the cytoplasm. In terms of biological role, required for chromosome condensation and partitioning. The sequence is that of Chromosome partition protein Smc from Fusobacterium nucleatum subsp. nucleatum (strain ATCC 25586 / DSM 15643 / BCRC 10681 / CIP 101130 / JCM 8532 / KCTC 2640 / LMG 13131 / VPI 4355).